The sequence spans 520 residues: Diacylglycerol O-acyltransferase 1 (520 aa).

2 disordered regions span residues 28–57 (RRKS…GAPA) and 72–116 (QGTA…AHRR). The span at 34–54 (DSSNGLLLSGSDNNSPSDDVG) shows a compositional bias: low complexity. Over residues 81 to 98 (NNGGGDNNGGGRGGGEGR) the composition is skewed to gly residues. The next 7 membrane-spanning stretches (helical) occupy residues 126-146 (AIFK…LIAV), 176-196 (WPLF…FTVE), 207-227 (PVVI…PVYV), 233-253 (SAFL…LKLV), 276-296 (VSYY…TLCY), 317-337 (KLVI…NPIV), and 365-385 (VWLC…AELL). The FYXDWWN motif signature appears at 392 to 398 (FYKDWWN). The next 3 helical transmembrane spans lie at 434 to 454 (LAII…IAVP), 457 to 477 (LFKL…FITN), and 487 to 507 (VGNM…CVLL). His447 is a catalytic residue.

Belongs to the membrane-bound acyltransferase family. Sterol o-acyltransferase subfamily. Interacts with LPCAT2 and LPAT2. In terms of tissue distribution, ubiquitous. Highest expression in young developing seeds.

The protein resides in the plastid. It localises to the chloroplast membrane. Its subcellular location is the endoplasmic reticulum membrane. It carries out the reaction an acyl-CoA + a 1,2-diacyl-sn-glycerol = a triacyl-sn-glycerol + CoA. It catalyses the reaction 1,2-di-(9Z-octadecenoyl)-sn-glycerol + (9Z)-octadecenoyl-CoA = 1,2,3-tri-(9Z-octadecenoyl)-glycerol + CoA. Its pathway is glycerolipid metabolism; triacylglycerol biosynthesis. Its activity is regulated as follows. Partially inhibited by niacin. Its function is as follows. Major contributor to triacylglycerol (TAG) synthesis and oil accumulation in seeds. Catalyzes the acylation of the sn-3 hydroxy group of sn-1,2-diacylglycerol using acyl-CoA. Can use palmitoyl-CoA and oleoyl-CoA as substrates. Can use oleoyl-CoA and linoleoyl-CoA as substrates. Has substrate preference for oleoyl-CoA compared to linoleoyl-CoA. Has complementary functions with PDAT1 that are essential for triacylglycerol synthesis and normal development of both seeds and pollen. The chain is Diacylglycerol O-acyltransferase 1 from Arabidopsis thaliana (Mouse-ear cress).